Reading from the N-terminus, the 324-residue chain is MGPWGEPELLVWRPEAVASEPSVPVGLEVKLGALVLLLLLTLICSLVPVCVLRRSGANHEASASGQKALSLVSCFAGGVFLATCLLDLLPDYLAAIDEALEALHVTLQFPLQEFILAMGFFLVLVMEQITLAYKEQTSPPHPEETRALLGTVNGGPQHWHDGPGIPQAGGTPAAPSALRACVLVFSLALHSVFEGLAVGLQRDRARAMELCLALLLHKGILAVSLSLRLLQSHLRVQVVAGCGILFSCMTPLGIGLGAALAESAGPLHQLAQSVLEGMAAGTFLYITFLEILPQELATSEQRILKVILLLAGFALLTGLLFVQI.

At 1 to 30 (MGPWGEPELLVWRPEAVASEPSVPVGLEVK) the chain is on the extracellular side. The helical transmembrane segment at 31–51 (LGALVLLLLLTLICSLVPVCV) threads the bilayer. At 52–68 (LRRSGANHEASASGQKA) the chain is on the cytoplasmic side. The chain crosses the membrane as a helical span at residues 69–89 (LSLVSCFAGGVFLATCLLDLL). At 90–104 (PDYLAAIDEALEALH) the chain is on the extracellular side. The helical transmembrane segment at 105 to 125 (VTLQFPLQEFILAMGFFLVLV) threads the bilayer. The Cytoplasmic portion of the chain corresponds to 126–179 (MEQITLAYKEQTSPPHPEETRALLGTVNGGPQHWHDGPGIPQAGGTPAAPSALR). Residues 180-200 (ACVLVFSLALHSVFEGLAVGL) form a helical membrane-spanning segment. At 201–206 (QRDRAR) the chain is on the extracellular side. A helical membrane pass occupies residues 207–227 (AMELCLALLLHKGILAVSLSL). Residues 228–237 (RLLQSHLRVQ) lie on the Cytoplasmic side of the membrane. Residues 238-258 (VVAGCGILFSCMTPLGIGLGA) form a helical membrane-spanning segment. The Extracellular portion of the chain corresponds to 259-272 (ALAESAGPLHQLAQ). The helical transmembrane segment at 273 to 293 (SVLEGMAAGTFLYITFLEILP) threads the bilayer. Residues 294 to 303 (QELATSEQRI) lie on the Cytoplasmic side of the membrane. A helical transmembrane segment spans residues 304-324 (LKVILLLAGFALLTGLLFVQI).

This sequence belongs to the ZIP transporter (TC 2.A.5) family. Ubiquitous, except in the pancreas. Highest levels seen in kidney, salivary gland and placenta.

It localises to the cell membrane. The protein resides in the endoplasmic reticulum membrane. It carries out the reaction Zn(2+)(in) = Zn(2+)(out). In terms of biological role, transporter for the divalent cation Zn(2+). Mediates the influx of Zn(2+) into cells from extracellular space. The chain is Zinc transporter ZIP1 (Slc39a1) from Mus musculus (Mouse).